Consider the following 263-residue polypeptide: MALGEDDILSVPFKYFVFCIGGLPSSALLICVLLSLFLHFDQATSTHCEVANWLPSISAAVSTYTPEKYIWRILIGLHIGPRLVVAVAFRNFLMSSPLRPYTGSKQFKFLCNIACGLNLLENFFLLALTSISSSEDHSLHAKCFGGFAISSIIYMILSTWLFSESGRRRATNLGERSYEYKILGASIFVVCFFLGGYLYWRHNTYCEPGIYTLFALVEYSAVLSNIFFHCTLYYDFHGKNIALTSSFGSSHYNLLPTQIEKDT.

6 helical membrane passes run phenylalanine 16–leucine 36, tyrosine 69–phenylalanine 89, phenylalanine 109–threonine 129, cysteine 143–serine 163, tyrosine 180–tryptophan 200, and proline 208–phenylalanine 228.

This sequence belongs to the PGAP2 family.

The protein localises to the golgi apparatus membrane. Its subcellular location is the endoplasmic reticulum membrane. Involved in the lipid remodeling steps of GPI-anchor maturation. Required for stable expression of GPI-anchored proteins at the cell surface. The sequence is that of Post-GPI attachment to proteins factor 2 from Caenorhabditis briggsae.